The following is a 491-amino-acid chain: FAD-dependent monooxygenase cle3 (491 aa).

The FAD site is built by E55, G69, R128, D330, and A343. N380 carries N-linked (GlcNAc...) asparagine glycosylation. A helical membrane pass occupies residues 462 to 482 (STVVWTSLGILGLVVFLFLLF).

This sequence belongs to the paxM FAD-dependent monooxygenase family. FAD serves as cofactor.

Its subcellular location is the membrane. It functions in the pathway secondary metabolite biosynthesis; terpenoid biosynthesis. Functionally, FAD-dependent monooxygenase; part of the cluster A that mediates the biosynthesis of chevalone E and its oxidized derivatives that possess a unique five-membered lactone ring and can synergistically enhance the cytotoxicity of doxorubicin (DOX) in breast cancer cells. Within the pathway, cle3 takes part to the biosynthesis of the molecular scaffold by catalyzing the formation of an (S)-epoxide ring at the terminal olefin of the geranylgeranyl group. The molecular scaffold is commonly biosynthesized by a series of enzymes including the non-reducing polyketide synthase (NR-PKS) cle1 that produces the alpha-pyrone triacetic acid lactone (TAL); The membrane-bound prenyltransferase cle5 that accepts TAL as its substrate to perform a C-3 geranylgeranylation reaction, in which the pathway-dedicated GGPS cle6 is required to provide GGPP, the other substrate of cle5; the FAD-dependent monooxygenase Cle3 that forms an (S)-epoxide ring at the terminal olefin of the geranylgeranyl group; and the terpene cyclase Cle7 that catalyzes the cyclization of the prenyl group that yields the pentacyclic pathway intermediate chevalone E. Chevalone E can derivatize into seven new oxidized analogs by the cytochrome P450 monooxygenases cle2 (acting at C-20) and cle4 (acting at C-11 and C-12). The polypeptide is FAD-dependent monooxygenase cle3 (Aspergillus versicolor).